The following is a 350-amino-acid chain: Bifunctional methylenetetrahydrofolate dehydrogenase/cyclohydrolase, mitochondrial (350 aa).

A mitochondrion-targeting transit peptide spans 1–35; it reads MAATSLMSALAARLLQPAHSCSLRLRPFHLAAVRN. An N6-acetyllysine; alternate modification is found at K50. K50 is covalently cross-linked (Glycyl lysine isopeptide (Lys-Gly) (interchain with G-Cter in SUMO2); alternate). Substrate-binding positions include 84 to 88 and 131 to 133; these read YVLNK and VQL. Residues 200 to 202 and R233 contribute to the NAD(+) site; that span reads GRS. 309–313 serves as a coordination point for substrate; sequence PGGVG.

Belongs to the tetrahydrofolate dehydrogenase/cyclohydrolase family. In terms of assembly, homodimer. The cofactor is Mg(2+).

It is found in the mitochondrion. The catalysed reaction is (6R)-5,10-methylene-5,6,7,8-tetrahydrofolate + NAD(+) = (6R)-5,10-methenyltetrahydrofolate + NADH. The enzyme catalyses (6R)-5,10-methenyltetrahydrofolate + H2O = (6R)-10-formyltetrahydrofolate + H(+). Although its dehydrogenase activity is NAD-specific, it can also utilize NADP at a reduced efficiency. This chain is Bifunctional methylenetetrahydrofolate dehydrogenase/cyclohydrolase, mitochondrial (MTHFD2), found in Homo sapiens (Human).